The following is a 1036-amino-acid chain: Integrin alpha-9 (1036 aa).

An N-terminal signal peptide occupies residues 1–28 (MGGPAAARTGAGGLRALLLALVAAGVPA). Residues 29–981 (GAYNLDAQRP…NLEPRGYVVG (953 aa)) are Extracellular-facing. FG-GAP repeat units lie at residues 36–97 (QRPV…PDRR), 109–175 (RGAP…AKGK), 183–233 (EYKK…NTYF), 234–290 (KLND…SGTL), 291–350 (IKIF…GALE), 352–409 (QLTL…GIVP), and 412–475 (SMKL…LPGS). 3 disulfide bridges follow: C88/C98, C143/C163, and C180/C195. Residue N226 is glycosylated (N-linked (GlcNAc...) asparagine). D313, N315, D317, D321, D374, D376, D378, D382, D436, D438, N440, and D444 together coordinate Ca(2+). Cysteines 483 and 492 form a disulfide. 2 N-linked (GlcNAc...) asparagine glycosylation sites follow: N494 and N515. 3 disulfides stabilise this stretch: C498-C556, C621-C626, and C697-C707. A glycan (N-linked (GlcNAc...) asparagine) is linked at N808. 2 disulfides stabilise this stretch: C856–C892 and C899–C904. A helical membrane pass occupies residues 982–1002 (WIIAISLLVGILIFLLLAVLL). Residues 1003–1036 (WKMGFFRRRYKEIIEAEKNRKENEDGWDWVQKNQ) are Cytoplasmic-facing. Residues 1006-1010 (GFFRR) carry the GFFKR motif motif.

It belongs to the integrin alpha chain family. As to quaternary structure, heterodimer of an alpha and a beta subunit. Alpha-9 (ITGA9) associates with beta-1 (ITGB1). Integrin ITGA9:ITGB1 interacts with FBLN5 (via N-terminus). Integrin ITGA9:ITGB1 interacts with SPP1/OPN (via N-terminus). Integrin ITGA9:ITGB1 interacts with TNC/TNFN3 (via the 3rd Fibronectin type-III domain). Integrin ITGA9:ITGB1 interacts with SVEP1/polydom (via Sushi domain 21); thereby inhibits Ca(2+) intracellular signaling and as a result represses vasocontraction. As to expression, expressed in the media layer of the arterial wall (at protein level). Expressed in the airway epithelium, skeletal muscle, basal keratincytes, the basal epithelium of the cornea, hepatocytes, giant cells in the spleen and smooth muscle of the stomach, duodenum and veins (at protein level).

It localises to the membrane. In terms of biological role, integrin alpha-9/beta-1 (ITGA9:ITGB1) is a receptor for VCAM1, cytotactin and osteopontin. It recognizes the sequence A-E-I-D-G-I-E-L in cytotactin. ITGA9:ITGB1 may play a crucial role in SVEP1/polydom-mediated myoblast cell adhesion. Integrin ITGA9:ITGB1 represses PRKCA-mediated L-type voltage-gated channel Ca(2+) influx and ROCK-mediated calcium sensitivity in vascular smooth muscle cells via its interaction with SVEP1, thereby inhibiting vasocontraction. The chain is Integrin alpha-9 from Mus musculus (Mouse).